The chain runs to 733 residues: Alpha,alpha-trehalose-phosphate synthase [UDP-forming] A (733 aa).

In the N-terminal section; belongs to the glycosyltransferase 20 family. The protein in the C-terminal section; belongs to the trehalose phosphatase family.

The enzyme catalyses D-glucose 6-phosphate + UDP-alpha-D-glucose = alpha,alpha-trehalose 6-phosphate + UDP + H(+). Synthesizes trehalose 6-phosphate, the precursor for the production of trehalose, the main carbohydrate storage reserve of the dormant spore. Trehalose accumulates in both prestalk and prespore cells and then is rapidly metabolized during terminal differentiation of stalk cells, while being stored in spores, where it serves as the principal energy and carbon source for germination. The chain is Alpha,alpha-trehalose-phosphate synthase [UDP-forming] A (tpsA) from Dictyostelium discoideum (Social amoeba).